The sequence spans 311 residues: Aspartate carbamoyltransferase catalytic subunit (311 aa).

Arg55 and Thr56 together coordinate carbamoyl phosphate. Lys85 is an L-aspartate binding site. Carbamoyl phosphate contacts are provided by Arg106, His135, and Gln138. The L-aspartate site is built by Arg168 and Arg230. 2 residues coordinate carbamoyl phosphate: Leu268 and Pro269.

It belongs to the aspartate/ornithine carbamoyltransferase superfamily. ATCase family. Heterododecamer (2C3:3R2) of six catalytic PyrB chains organized as two trimers (C3), and six regulatory PyrI chains organized as three dimers (R2).

It carries out the reaction carbamoyl phosphate + L-aspartate = N-carbamoyl-L-aspartate + phosphate + H(+). The protein operates within pyrimidine metabolism; UMP biosynthesis via de novo pathway; (S)-dihydroorotate from bicarbonate: step 2/3. In terms of biological role, catalyzes the condensation of carbamoyl phosphate and aspartate to form carbamoyl aspartate and inorganic phosphate, the committed step in the de novo pyrimidine nucleotide biosynthesis pathway. The polypeptide is Aspartate carbamoyltransferase catalytic subunit (Salmonella paratyphi A (strain AKU_12601)).